The primary structure comprises 262 residues: Short-chain Z-isoprenyl diphosphate synthase (262 aa).

Residue aspartate 40 is part of the active site. Aspartate 40 contributes to the Mg(2+) binding site. Residues 41–44 (GNRR), tryptophan 45, and 86–88 (STE) contribute to the substrate site. Asparagine 89 serves as the catalytic Proton acceptor. Residues arginine 92, arginine 211, and 217–219 (RLS) contribute to the substrate site. Glutamate 230 is a Mg(2+) binding site.

It belongs to the UPP synthase family. Z-FPP synthase subfamily. It depends on Mg(2+) as a cofactor.

The enzyme catalyses isopentenyl diphosphate + (2E)-geranyl diphosphate = (2Z,6E)-farnesyl diphosphate + diphosphate. It functions in the pathway phospholipid metabolism; decaprenyl phosphate biosynthesis. Its function is as follows. Generates Z-farnesyl diphosphate (Z-FPP) from isopentenyl pyrophosphate (IPP). Z-FPP is the precursor of decaprenyl diphosphate, which has a central role in the biosynthesis of the mycobacterial cell wall. This chain is Short-chain Z-isoprenyl diphosphate synthase, found in Mycobacterium leprae (strain TN).